Reading from the N-terminus, the 217-residue chain is Urease accessory protein UreE (217 aa).

The interval 148–217 (AYGEAAAHGH…DHDHGSGHHH (70 aa)) is disordered. Positions 160 to 171 (AGHDHAHDHDHG) are enriched in basic and acidic residues. Positions 193-202 (AAAPAPHVHG) are enriched in low complexity. Residues 206-217 (GHDHDHGSGHHH) show a composition bias toward basic and acidic residues.

Belongs to the UreE family.

It is found in the cytoplasm. In terms of biological role, involved in urease metallocenter assembly. Binds nickel. Probably functions as a nickel donor during metallocenter assembly. This Methylibium petroleiphilum (strain ATCC BAA-1232 / LMG 22953 / PM1) protein is Urease accessory protein UreE.